We begin with the raw amino-acid sequence, 396 residues long: Trypacidin cluster transcription factor (396 aa).

Positions 20-47 form a DNA-binding region, zn(2)-C6 fungal-type; that stretch reads CRACGLSKVRCSKEKPTCSRCRRRGTVC. Disordered regions lie at residues 54 to 120, 190 to 218, and 346 to 365; these read RPGR…LSTV, DPAPPDQSLPATTTIGRRASPPSGRESEA, and MHGAQGASPGQAFHGTPAPL. The span at 57–71 shows a compositional bias: basic and acidic residues; that stretch reads RKPDSRSEVEPEPGH. Over residues 72-82 the composition is skewed to low complexity; the sequence is LSHPLPSPESS.

As to expression, specifically expressed in conidia.

The protein resides in the nucleus. Transcription factor that regulates the expression of the gene clusters that mediate the biosynthesis of trypacidin, a metabolite with antiprotozoal activity and a possible role in the infection process. Trypacidin is toxic for human pulmonary and bronchial epithelial cells by initiating the intracellular formation of nitric oxide (NO) and hydrogen peroxide (H(2)O(2)), thus triggering host necrotic cell death. This Aspergillus fumigatus (strain ATCC MYA-4609 / CBS 101355 / FGSC A1100 / Af293) (Neosartorya fumigata) protein is Trypacidin cluster transcription factor.